Reading from the N-terminus, the 257-residue chain is Dihydroorotate dehydrogenase B (NAD(+)), electron transfer subunit (257 aa).

In terms of domain architecture, FAD-binding FR-type spans 2–102 (IGRERMTVAS…LGPLGNGFPL (101 aa)). FAD contacts are provided by residues 53-56 (RPLS), 70-72 (IYR), and 77-78 (GT). [2Fe-2S] cluster-binding residues include Cys-221, Cys-226, Cys-229, and Cys-244.

Belongs to the PyrK family. As to quaternary structure, heterotetramer of 2 PyrK and 2 PyrD type B subunits. [2Fe-2S] cluster serves as cofactor. FAD is required as a cofactor.

It functions in the pathway pyrimidine metabolism; UMP biosynthesis via de novo pathway; orotate from (S)-dihydroorotate (NAD(+) route): step 1/1. Responsible for channeling the electrons from the oxidation of dihydroorotate from the FMN redox center in the PyrD type B subunit to the ultimate electron acceptor NAD(+). The sequence is that of Dihydroorotate dehydrogenase B (NAD(+)), electron transfer subunit from Bacillus caldolyticus.